We begin with the raw amino-acid sequence, 473 residues long: 3-isopropylmalate dehydratase large subunit (473 aa).

3 residues coordinate [4Fe-4S] cluster: C349, C409, and C412.

This sequence belongs to the aconitase/IPM isomerase family. LeuC type 1 subfamily. In terms of assembly, heterodimer of LeuC and LeuD. [4Fe-4S] cluster is required as a cofactor.

The catalysed reaction is (2R,3S)-3-isopropylmalate = (2S)-2-isopropylmalate. The protein operates within amino-acid biosynthesis; L-leucine biosynthesis; L-leucine from 3-methyl-2-oxobutanoate: step 2/4. Catalyzes the isomerization between 2-isopropylmalate and 3-isopropylmalate, via the formation of 2-isopropylmaleate. The protein is 3-isopropylmalate dehydratase large subunit of Gloeobacter violaceus (strain ATCC 29082 / PCC 7421).